Here is a 150-residue protein sequence, read N- to C-terminus: UPF0260 protein PP_4587 (150 aa).

Belongs to the UPF0260 family.

The polypeptide is UPF0260 protein PP_4587 (Pseudomonas putida (strain ATCC 47054 / DSM 6125 / CFBP 8728 / NCIMB 11950 / KT2440)).